The sequence spans 194 residues: uncharacterized protein (194 aa).

One can recognise an SIS domain in the interval 34–192 (VMQCLLGGNK…CELVDQTLFP (159 aa)).

It belongs to the SIS family. DiaA subfamily.

This is an uncharacterized protein from Haemophilus influenzae (strain ATCC 51907 / DSM 11121 / KW20 / Rd).